The primary structure comprises 63 residues: Large ribosomal subunit protein bL28 (63 aa).

The protein belongs to the bacterial ribosomal protein bL28 family.

The sequence is that of Large ribosomal subunit protein bL28 from Mycoplasmopsis synoviae (strain 53) (Mycoplasma synoviae).